The following is a 1447-amino-acid chain: Inositol 1,4,5-triphosphate receptor associated 2 (1447 aa).

Topologically, residues Met1 to Gly1388 are cytoplasmic. Disordered stretches follow at residues Val64–Pro96 and Leu420–Met439. A compositionally biased stretch (polar residues) spans Ser71 to Thr92. Coiled-coil stretches lie at residues Phe354–Ser518 and Thr665–Glu731. Over residues Leu420–Arg436 the composition is skewed to low complexity. Disordered stretches follow at residues Lys790–Gln828, Lys841–Arg860, Pro991–Asp1132, Asn1267–Asn1289, and Asp1355–Arg1379. Positions Val800 to Gly812 are enriched in basic and acidic residues. A compositionally biased stretch (polar residues) spans Lys1021 to Ala1035. 2 stretches are compositionally biased toward basic and acidic residues: residues Ser1037 to Thr1049 and Lys1080 to Glu1096. The interval Arg1076–Thr1265 is necessary for spindle and spindle pole localization. Over residues Thr1110–Asp1119 the composition is skewed to polar residues. A compositionally biased stretch (basic and acidic residues) spans Ser1120–Asp1132. The segment covering Leu1359–Ala1371 has biased composition (polar residues). Positions Gly1388–Val1447 are necessary for nuclear membrane localization. A helical; Anchor for type IV membrane protein membrane pass occupies residues Ile1389–Leu1409. At Met1410–Val1447 the chain is on the lumenal side.

Belongs to the IRAG2 family.

The protein localises to the endoplasmic reticulum membrane. The protein resides in the nucleus envelope. It localises to the cytoplasm. It is found in the cytoskeleton. Its subcellular location is the microtubule organizing center. The protein localises to the centrosome. The protein resides in the spindle pole. It localises to the chromosome. In terms of biological role, a maternally expressed membrane and cytoskeletal linker protein, which is essential for attachment of the centrosome to the male pronucleus. Promotes male and female pronucleus congression and subsequent fusion after fertilization. Congression is mediated by the sperm aster microtubules. This chain is Inositol 1,4,5-triphosphate receptor associated 2 (irag2), found in Danio rerio (Zebrafish).